The primary structure comprises 870 residues: Lysosomal cholesterol signaling protein (870 aa).

Topologically, residues 1–38 (MNSNLPAENLTIAVNMTKTLPTAVTHGFNSTNDPPSMS) are lumenal. Positions 1 to 370 (MNSNLPAENL…SAWLLTFPTM (370 aa)) are PIN-like transporter. Residues N9, N15, and N29 are each glycosylated (N-linked (GlcNAc...) asparagine). A helical transmembrane segment spans residues 39–59 (ITRLFPALLECFGIVLCGYIA). The cholesterol site is built by F43 and Y57. The Cytoplasmic segment spans residues 60 to 79 (GRANVITSTQAKGLGNFVSR). Residues 80–100 (FALPALLFKNMVVLNFSNVDW) traverse the membrane as a helical segment. The Lumenal portion of the chain corresponds to 101–104 (SFLY). A helical membrane pass occupies residues 105–125 (SILIAKASVFFIVCVLTLLVA). Residues 126–133 (SPDSRFSK) are Cytoplasmic-facing. Residues 134–154 (AGLFPIFATQSNDFALGYPIV) form a discontinuously helical membrane-spanning segment. Residues 155–167 (EALYQTTYPEYLQ) are Lumenal-facing. A helical transmembrane segment spans residues 168 to 188 (YIYLVAPISLMMLNPIGFIFC). The Cytoplasmic portion of the chain corresponds to 189 to 213 (EIQKWKDTQNASQNKIKIVGLGLLR). The discontinuously helical transmembrane segment at 214–234 (VLQNPIVFMVFIGIAFNFILD) threads the bilayer. Over 235 to 243 (RKVPVYVEN) the chain is Lumenal. A discontinuously helical transmembrane segment spans residues 244 to 264 (FLDGLGNSFSGSALFYLGLTM). Topologically, residues 265 to 273 (VGKIKRLKK) are cytoplasmic. Cholesterol-binding residues include G266, K267, and I268. The chain crosses the membrane as a helical span at residues 274–294 (SAFVVLILLITAKLLVLPLLC). Topologically, residues 295–315 (REMVELLDKGDSVVNHTSLSN) are lumenal. N309 carries N-linked (GlcNAc...) asparagine glycosylation. The chain crosses the membrane as a discontinuously helical span at residues 316-336 (YAFLYGVFPVAPGVAIFATQF). The Cytoplasmic segment spans residues 337–346 (NMEVEIITSG). A helical membrane pass occupies residues 347 to 367 (MVISTFVSAPIMYVSAWLLTF). Residues 368–381 (PTMDPKPLAYAIQN) lie on the Lumenal side of the membrane. Residues 380–717 (QNVSFDISIV…FGIFGLDKHL (338 aa)) form a GPCR region. N-linked (GlcNAc...) asparagine glycosylation is present at N381. Residues 382-402 (VSFDISIVSLISLIWSLAILL) traverse the membrane as a helical segment. Residues 403-414 (LSKKYKQLPHML) lie on the Cytoplasmic side of the membrane. The chain crosses the membrane as a helical span at residues 415-435 (TTNLLIAQSIVCAGMMIWNFV). Residues 436–438 (KEK) lie on the Lumenal side of the membrane. A helical membrane pass occupies residues 439 to 459 (NFVGQILVFVLLYSSLYSTYL). The Cytoplasmic segment spans residues 460–480 (WTGLLAISLFLLKKRERVQIP). A helical membrane pass occupies residues 481–501 (VGIIIISGWGIPALLVGVLLI). Residues 502 to 520 (TGKHNGDSIDSAFFYGKEQ) lie on the Lumenal side of the membrane. A helical membrane pass occupies residues 521-541 (MITTAVTLFCSILIAGISLMC). At 542 to 660 (MNQTAQAGSY…GDQQLTRHVL (119 aa)) the chain is on the cytoplasmic side. Cholesterol is bound at residue R657. Residues 661 to 681 (LCLLLIIGLFANLSSCLWWLF) form a helical membrane-spanning segment. The Lumenal portion of the chain corresponds to 682–691 (NQEPGRLYVE). Residues 692–712 (LQFFCAVFNFGQGFISFGIFG) traverse the membrane as a helical segment. Topologically, residues 713–870 (LDKHLIILPF…SSPPSHSPKT (158 aa)) are cytoplasmic. The DEP domain occupies 757–835 (YHRDLCIRNI…DEYLFYRFLQ (79 aa)).

As to quaternary structure, homodimer; via the transporter region and DEP domain. Interacts with the GATOR1 complex and prevents interaction between GATOR1 and KICSTOR; this interaction is disrupted upon cholesterol starvation.

The protein localises to the lysosome membrane. Cholesterol-binding protein that acts as a regulator of mTORC1 signaling pathway. Acts as a sensor of cholesterol to signal cholesterol sufficiency to mTORC1: in presence of cholesterol, binds cholesterol, leading to disruption of the interaction between the GATOR1 and KICSTOR complexes and promotion of mTORC1 signaling. Upon cholesterol starvation, GPR155/LYCHOS is unable to perturb the association between GATOR1 and KICSTOR, leading to mTORC1 signaling inhibition. Binds indole-3-acetic acid and may play a role in tryptophan metabolism. The polypeptide is Lysosomal cholesterol signaling protein (Homo sapiens (Human)).